Reading from the N-terminus, the 274-residue chain is Dermonecrotic toxin SdSicTox-betaIIB1aii (274 aa).

His5 is an active-site residue. Mg(2+) contacts are provided by Glu25 and Asp27. His41 (nucleophile) is an active-site residue. 2 disulfides stabilise this stretch: Cys45–Cys51 and Cys47–Cys190. Asp85 contacts Mg(2+).

This sequence belongs to the arthropod phospholipase D family. Class II subfamily. Mg(2+) serves as cofactor. In terms of tissue distribution, expressed by the venom gland.

It localises to the secreted. The catalysed reaction is an N-(acyl)-sphingosylphosphocholine = an N-(acyl)-sphingosyl-1,3-cyclic phosphate + choline. It catalyses the reaction an N-(acyl)-sphingosylphosphoethanolamine = an N-(acyl)-sphingosyl-1,3-cyclic phosphate + ethanolamine. It carries out the reaction a 1-acyl-sn-glycero-3-phosphocholine = a 1-acyl-sn-glycero-2,3-cyclic phosphate + choline. The enzyme catalyses a 1-acyl-sn-glycero-3-phosphoethanolamine = a 1-acyl-sn-glycero-2,3-cyclic phosphate + ethanolamine. Functionally, dermonecrotic toxins cleave the phosphodiester linkage between the phosphate and headgroup of certain phospholipids (sphingolipid and lysolipid substrates), forming an alcohol (often choline) and a cyclic phosphate. This toxin acts on sphingomyelin (SM). It may also act on ceramide phosphoethanolamine (CPE), lysophosphatidylcholine (LPC) and lysophosphatidylethanolamine (LPE), but not on lysophosphatidylserine (LPS), and lysophosphatidylglycerol (LPG). It acts by transphosphatidylation, releasing exclusively cyclic phosphate products as second products. Induces dermonecrosis, hemolysis, increased vascular permeability, edema, inflammatory response, and platelet aggregation. This chain is Dermonecrotic toxin SdSicTox-betaIIB1aii, found in Sicarius cf. damarensis (strain GJB-2008) (Six-eyed sand spider).